Here is a 654-residue protein sequence, read N- to C-terminus: NADPH-dependent diflavin oxidoreductase 1 (654 aa).

Over residues 1 to 10 (MSGSQSSGSP) the composition is skewed to low complexity. The interval 1–22 (MSGSQSSGSPGSPGPPGPPGRS) is disordered. Positions 23 to 167 (ALVVYGSETG…TFIPWLAGFR (145 aa)) constitute a Flavodoxin-like domain. Residues 29–34 (SETGNA), 76–79 (STTG), and 114–123 (LGDSSYPKFN) contribute to the FMN site. Residues 235–485 (HDSLTATLVQ…QLQRGGLNSS (251 aa)) enclose the FAD-binding FR-type domain. Residues arginine 389, 419-422 (RQFS), and 458-461 (GVCT) each bind FAD. Residues threonine 500, 568-569 (SR), and 574-578 (KVYVQ) each bind NADP(+). Tryptophan 654 provides a ligand contact to FAD.

This sequence belongs to the NADPH-dependent diflavin oxidoreductase NDOR1 family. The protein in the N-terminal section; belongs to the flavodoxin family. It in the C-terminal section; belongs to the flavoprotein pyridine nucleotide cytochrome reductase family. Interacts with dre2; as part of the cytosolic iron-sulfur (Fe-S) protein assembly (CIA) machinery. It depends on FAD as a cofactor. The cofactor is FMN.

It is found in the cytoplasm. It localises to the mitochondrion. The enzyme catalyses 2 oxidized [2Fe-2S]-[protein] + NADPH = 2 reduced [2Fe-2S]-[protein] + NADP(+) + H(+). NADPH-dependent reductase which is a central component of the cytosolic iron-sulfur (Fe-S) protein assembly (CIA) machinery. Transfers electrons from NADPH via its FAD and FMN prosthetic groups to the [2Fe-2S] cluster of dre2, another key component of the CIA machinery. In turn, this reduced cluster provides electrons for assembly of cytosolic iron-sulfur cluster proteins. Positively controls H(2)O(2)-induced cell death. The sequence is that of NADPH-dependent diflavin oxidoreductase 1 from Emericella nidulans (strain FGSC A4 / ATCC 38163 / CBS 112.46 / NRRL 194 / M139) (Aspergillus nidulans).